Here is a 567-residue protein sequence, read N- to C-terminus: Diphtheria toxin (567 aa).

The first 32 residues, 1–32, serve as a signal peptide directing secretion; that stretch reads MLVRGYVVSRKLFASILIGALLGIGAPPSAHA. NAD(+)-binding residues include H53 and Y97. Residue E180 is part of the active site. Intrachain disulfides connect C218–C233 and C493–C503.

In terms of assembly, homodimer. In terms of processing, proteolytic activation by host furin cleaves the protein in two parts, Diphtheria toxin fragment A and Diphtheria toxin fragment B; which remain associated via a disulfide bond.

The enzyme catalyses diphthamide-[translation elongation factor 2] + NAD(+) = N-(ADP-D-ribosyl)diphthamide-[translation elongation factor 2] + nicotinamide + H(+). Its activity is regulated as follows. Partially inhibited by 1,8-naphthalimide (NAP). In terms of biological role, diphtheria toxin, produced by a phage infecting Corynebacterium diphtheriae, is a proenzyme that, after activation, catalyzes the covalent attachment of the ADP ribose moiety of NAD to eukaryotic elongation factor 2 (eEF-2). Fragment A is the catalytic portion responsible for enzymatic ADP-ribosylation of elongation factor 2, while fragment B is responsible for binding of toxin to cell receptors and entry of fragment A. The polypeptide is Diphtheria toxin (Corynebacterium diphtheriae).